Reading from the N-terminus, the 142-residue chain is Maximins y/Hv type 1 (142 aa).

The signal sequence occupies residues 1-18 (MNFKYIVAVSFLIASGYA). A propeptide spanning residues 19 to 43 (RSEENDVQSLSQREVLEEESLREIR) is cleaved from the precursor. Position 68 is a phenylalanine amide (F68). The propeptide occupies 72-121 (TAEDHEVMKRLEAVMRDLDSLDHPEEASERETRGFNQEEIANLFTKKEKR). I141 is modified (isoleucine amide).

It belongs to the bombinin family. Expressed by the skin glands.

The protein resides in the secreted. In terms of biological role, maximin-y shows antimicrobial activity against bacteria and against the fungus C.albicans. It has little hemolytic activity. Functionally, maximin-Hv shows antimicrobial activity against bacteria and against the fungus C.albicans. Shows strong hemolytic activity. This is Maximins y/Hv type 1 from Bombina maxima (Giant fire-bellied toad).